The sequence spans 720 residues: Phenylalanine--tRNA ligase beta subunit, chloroplastic (720 aa).

The B5 domain occupies 319–404; the sequence is NSTLNIDISL…RVYGYNQFQS (86 aa). Mg(2+) contacts are provided by D382, D388, E391, and E392. An FDX-ACB domain is found at 626-719; the sequence is SKYPCITRDL…IIKKLNLEIR (94 aa).

It belongs to the phenylalanyl-tRNA synthetase beta subunit family. Type 1 subfamily. In terms of assembly, tetramer of two alpha and two beta subunits. Requires Mg(2+) as cofactor.

Its subcellular location is the plastid. It is found in the chloroplast. It catalyses the reaction tRNA(Phe) + L-phenylalanine + ATP = L-phenylalanyl-tRNA(Phe) + AMP + diphosphate + H(+). The protein is Phenylalanine--tRNA ligase beta subunit, chloroplastic (pheT) of Porphyra purpurea (Red seaweed).